Here is a 473-residue protein sequence, read N- to C-terminus: tRNA-2-methylthio-N(6)-dimethylallyladenosine synthase (473 aa).

An MTTase N-terminal domain is found at 5–125 (RKLHIKSFGC…LPQLLAEAAR (121 aa)). 6 residues coordinate [4Fe-4S] cluster: Cys-14, Cys-50, Cys-88, Cys-166, Cys-170, and Cys-173. One can recognise a Radical SAM core domain in the interval 152–384 (RARGISAFVT…QELIDSQQAA (233 aa)). One can recognise a TRAM domain in the interval 387–449 (AAVIGTTVEV…RYSLIGELAA (63 aa)). Residues 452 to 473 (QHSGFATRSEDSPQSLPITTGA) form a disordered region.

The protein belongs to the methylthiotransferase family. MiaB subfamily. Monomer. It depends on [4Fe-4S] cluster as a cofactor.

It is found in the cytoplasm. The enzyme catalyses N(6)-dimethylallyladenosine(37) in tRNA + (sulfur carrier)-SH + AH2 + 2 S-adenosyl-L-methionine = 2-methylsulfanyl-N(6)-dimethylallyladenosine(37) in tRNA + (sulfur carrier)-H + 5'-deoxyadenosine + L-methionine + A + S-adenosyl-L-homocysteine + 2 H(+). Functionally, catalyzes the methylthiolation of N6-(dimethylallyl)adenosine (i(6)A), leading to the formation of 2-methylthio-N6-(dimethylallyl)adenosine (ms(2)i(6)A) at position 37 in tRNAs that read codons beginning with uridine. The sequence is that of tRNA-2-methylthio-N(6)-dimethylallyladenosine synthase from Rhodopseudomonas palustris (strain BisB18).